Here is a 769-residue protein sequence, read N- to C-terminus: Phenylalanine--tRNA ligase beta subunit (769 aa).

Positions 40-141 constitute a tRNA-binding domain; that stretch reads GKLLTIARVA…GEPIPGCEPD (102 aa). Positions 389–467 constitute a B5 domain; it reads PAPPPIELPL…RMIGYDSIAP (79 aa). 4 residues coordinate Mg(2+): Asp-445, Asp-451, Glu-454, and Glu-455. Residues 676–768 form the FDX-ACB domain; it reads RRYPSSAFDL…GMRAKGYELR (93 aa).

Belongs to the phenylalanyl-tRNA synthetase beta subunit family. Type 1 subfamily. Tetramer of two alpha and two beta subunits. It depends on Mg(2+) as a cofactor.

Its subcellular location is the cytoplasm. It catalyses the reaction tRNA(Phe) + L-phenylalanine + ATP = L-phenylalanyl-tRNA(Phe) + AMP + diphosphate + H(+). This chain is Phenylalanine--tRNA ligase beta subunit, found in Solibacter usitatus (strain Ellin6076).